A 108-amino-acid chain; its full sequence is Zinc finger protein 475 (108 aa).

C2HC/C3H-type zinc fingers lie at residues 6–35 and 79–108; these read PAVV…KWHN and QLVP…KAAK. Zn(2+) contacts are provided by Cys-10, Cys-13, His-25, Cys-29, Cys-83, Cys-86, His-98, and Cys-102.

Zn(2+) is required as a cofactor.

The sequence is that of Zinc finger protein 475 from Homo sapiens (Human).